We begin with the raw amino-acid sequence, 157 residues long: Transcriptional repressor NrdR (157 aa).

A disordered region spans residues Met1–Asn21. The segment at Cys3–Cys34 is a zinc-finger region. In terms of domain architecture, ATP-cone spans Leu49–Ala139.

The protein belongs to the NrdR family. Zn(2+) is required as a cofactor.

Negatively regulates transcription of bacterial ribonucleotide reductase nrd genes and operons by binding to NrdR-boxes. In Ligilactobacillus salivarius (strain UCC118) (Lactobacillus salivarius), this protein is Transcriptional repressor NrdR.